The following is a 206-amino-acid chain: Orotate phosphoribosyltransferase (206 aa).

Residues Arg-97, Lys-98, Lys-101, and Asn-125–Ser-133 each bind 5-phospho-alpha-D-ribose 1-diphosphate. Arg-157 contacts orotate.

This sequence belongs to the purine/pyrimidine phosphoribosyltransferase family. PyrE subfamily. Homodimer. The cofactor is Mg(2+).

The catalysed reaction is orotidine 5'-phosphate + diphosphate = orotate + 5-phospho-alpha-D-ribose 1-diphosphate. It functions in the pathway pyrimidine metabolism; UMP biosynthesis via de novo pathway; UMP from orotate: step 1/2. Its function is as follows. Catalyzes the transfer of a ribosyl phosphate group from 5-phosphoribose 1-diphosphate to orotate, leading to the formation of orotidine monophosphate (OMP). In Chlamydia felis (strain Fe/C-56) (Chlamydophila felis), this protein is Orotate phosphoribosyltransferase.